Consider the following 420-residue polypeptide: Mannose-1-phosphate guanylyltransferase regulatory subunit alpha (420 aa).

The segment at 2–251 is substrate-binding domain; the sequence is LKAVILIGGP…DGIWSQIKSA (250 aa). E85 and Q247 together coordinate GDP-alpha-D-mannose. Positions 273–420 are hexapeptide repeat domain; the sequence is LARHTAGGPR…SRSFTNQIIL (148 aa). A C-loop region spans residues 356–384; sequence TPNDPNPNDPRARMDSESLFKDGKLLPAI.

It belongs to the transferase hexapeptide repeat family. As to quaternary structure, component of the GMPPA-GMPPB mannose-1-phosphate guanylyltransferase complex composed of 4 GMPPA subunits and 8 GMPPB subunits; the complex is organized into three layers, a central layer made up of 2 GMPPA dimers sandwiched between two layers each made up of 2 GMPPB dimers.

It is found in the cytoplasm. Regulatory subunit of the GMPPA-GMPPB mannose-1-phosphate guanylyltransferase complex; reduces the catalytic activity of GMPPB when part of the complex. Mediates allosteric feedback inhibition of GMPPB catalytic activity upon binding GDP-alpha-D-mannose. Together with GMPPB regulates GDP-alpha-D-mannose levels. This chain is Mannose-1-phosphate guanylyltransferase regulatory subunit alpha (Gmppa), found in Rattus norvegicus (Rat).